We begin with the raw amino-acid sequence, 488 residues long: Glutamate--tRNA ligase (488 aa).

A 'HIGH' region motif is present at residues proline 11 to asparagine 21. The Zn(2+) site is built by cysteine 108, cysteine 110, cysteine 135, and aspartate 137. A 'KMSKS' region motif is present at residues lysine 252–arginine 256. Lysine 255 lines the ATP pocket.

Belongs to the class-I aminoacyl-tRNA synthetase family. Glutamate--tRNA ligase type 1 subfamily. As to quaternary structure, monomer. Requires Zn(2+) as cofactor.

It localises to the cytoplasm. The catalysed reaction is tRNA(Glu) + L-glutamate + ATP = L-glutamyl-tRNA(Glu) + AMP + diphosphate. In terms of biological role, catalyzes the attachment of glutamate to tRNA(Glu) in a two-step reaction: glutamate is first activated by ATP to form Glu-AMP and then transferred to the acceptor end of tRNA(Glu). The polypeptide is Glutamate--tRNA ligase (Natranaerobius thermophilus (strain ATCC BAA-1301 / DSM 18059 / JW/NM-WN-LF)).